Consider the following 281-residue polypeptide: NADPH-dependent 7-cyano-7-deazaguanine reductase (281 aa).

87-89 contributes to the substrate binding site; sequence IES. 89–90 contacts NADPH; it reads SK. Cys188 (thioimide intermediate) is an active-site residue. The active-site Proton donor is Asp195. 227 to 228 provides a ligand contact to substrate; sequence HE. 256-257 serves as a coordination point for NADPH; sequence RG.

It belongs to the GTP cyclohydrolase I family. QueF type 2 subfamily. As to quaternary structure, homodimer.

It localises to the cytoplasm. The catalysed reaction is 7-aminomethyl-7-carbaguanine + 2 NADP(+) = 7-cyano-7-deazaguanine + 2 NADPH + 3 H(+). The protein operates within tRNA modification; tRNA-queuosine biosynthesis. In terms of biological role, catalyzes the NADPH-dependent reduction of 7-cyano-7-deazaguanine (preQ0) to 7-aminomethyl-7-deazaguanine (preQ1). The sequence is that of NADPH-dependent 7-cyano-7-deazaguanine reductase from Photobacterium profundum (strain SS9).